A 189-amino-acid chain; its full sequence is Hypoxanthine/guanine phosphoribosyltransferase (189 aa).

It belongs to the purine/pyrimidine phosphoribosyltransferase family. Archaeal HPRT subfamily. In terms of assembly, homodimer.

The protein resides in the cytoplasm. It carries out the reaction IMP + diphosphate = hypoxanthine + 5-phospho-alpha-D-ribose 1-diphosphate. The enzyme catalyses GMP + diphosphate = guanine + 5-phospho-alpha-D-ribose 1-diphosphate. The protein operates within purine metabolism; IMP biosynthesis via salvage pathway; IMP from hypoxanthine: step 1/1. Functionally, catalyzes a salvage reaction resulting in the formation of IMP that is energically less costly than de novo synthesis. The chain is Hypoxanthine/guanine phosphoribosyltransferase (hpt) from Methanosarcina acetivorans (strain ATCC 35395 / DSM 2834 / JCM 12185 / C2A).